Here is a 725-residue protein sequence, read N- to C-terminus: ABC transporter G family member 7 (725 aa).

The helical transmembrane segment at 12 to 34 threads the bilayer; sequence VVSGIGGNGVGGALAAVAAALLV. Residues 70-316 enclose the ABC transporter domain; the sequence is IRWRNITCSL…YFGNFGFLCP (247 aa). 108-115 is an ATP binding site; it reads GPSGSGKT. The 212-residue stretch at 392 to 603 folds into the ABC transmembrane type-2 domain; that stretch reads RQFFLLLKRA…AFQGLCINEF (212 aa). 4 helical membrane passes run 446–466, 493–513, 528–548, and 553–573; these read LLQV…VGVF, IAEI…LYPM, GIVT…GAMV, and AAMA…GYYV. The interval 676 to 725 is disordered; the sequence is NSGVQLDKAEVDQTEKPEDDDINQPLDDQNQTSDSDDELDEIRPFVLEGL. A compositionally biased stretch (basic and acidic residues) spans 682 to 691; that stretch reads DKAEVDQTEK.

Belongs to the ABC transporter superfamily. ABCG family. Eye pigment precursor importer (TC 3.A.1.204) subfamily.

It localises to the membrane. The protein is ABC transporter G family member 7 (ABCG7) of Arabidopsis thaliana (Mouse-ear cress).